The sequence spans 129 residues: Large ribosomal subunit protein uL22 (129 aa).

This sequence belongs to the universal ribosomal protein uL22 family. Part of the 50S ribosomal subunit.

Its function is as follows. This protein binds specifically to 23S rRNA; its binding is stimulated by other ribosomal proteins, e.g. L4, L17, and L20. It is important during the early stages of 50S assembly. It makes multiple contacts with different domains of the 23S rRNA in the assembled 50S subunit and ribosome. The globular domain of the protein is located near the polypeptide exit tunnel on the outside of the subunit, while an extended beta-hairpin is found that lines the wall of the exit tunnel in the center of the 70S ribosome. In Bartonella henselae (strain ATCC 49882 / DSM 28221 / CCUG 30454 / Houston 1) (Rochalimaea henselae), this protein is Large ribosomal subunit protein uL22.